The chain runs to 1166 residues: Serine/threonine-protein kinase BRI1-like 1 (1166 aa).

The N-terminal stretch at 1-21 is a signal peptide; it reads MKQRWLLVLILCFFTTSLVMG. The Extracellular segment spans residues 22–776; it reads IHGKHLINDD…IHAKKQTVAT (755 aa). Asn33 carries N-linked (GlcNAc...) asparagine glycosylation. Residues 66 to 73 carry the Cys pair 1 motif; that stretch reads CSWRGVSC. LRR repeat units follow at residues 78-99, 103-124, 126-147, 152-173, 176-197, 202-224, 227-248, 252-274, 278-300, 303-325, 327-349, 352-375, 376-397, 403-424, 427-449, 451-473, 476-498, 500-522, 524-547, and 548-570; these read RIVG…VNLT, NLQN…SGSD, YLQV…DYVF, NLVS…APSS, SLTT…SFIS, SLKY…SFGI, NLTF…ITLP, FLET…EYWG, NLKQ…LSLL, TLVI…FTAC, WLQN…VVSK, GITY…TNCS, NLRV…GFCS, VLEK…ELGK, SLKT…IWML, NLSD…VCVK, NLET…ISRC, NMIW…IGNL, KLAI…GNCK, and SLIW…LASQ. An N-linked (GlcNAc...) asparagine glycan is attached at Asn97. N-linked (GlcNAc...) asparagine glycosylation occurs at Asn157. N-linked (GlcNAc...) asparagine glycans are attached at residues Asn212, Asn227, Asn237, and Asn257. Residues Asn362 and Asn373 are each glycosylated (N-linked (GlcNAc...) asparagine). 2 N-linked (GlcNAc...) asparagine glycosylation sites follow: Asn451 and Asn461. N-linked (GlcNAc...) asparagine glycans are attached at residues Asn521, Asn532, Asn558, and Asn638. 3 LRR repeats span residues 664-686, 688-710, and 712-734; these read YLQV…FGGL, AIGV…LGSL, and FLSD…GQLT. N-linked (GlcNAc...) asparagine glycosylation is found at Asn722 and Asn743. A Cys pair 2 motif is present at residues 748-755; it reads CGVPLRPC. Residues 777-797 form a helical membrane-spanning segment; sequence AVIAGIAFSFMCFVMLVMALY. Residues 798-1166 are Cytoplasmic-facing; the sequence is RVRKVQKKEQ…LVEESRDKEP (369 aa). Residues Thr848 and Thr856 each carry the phosphothreonine modification. A Protein kinase domain is found at 859 to 1147; that stretch reads FSAETMVGSG…KADTEEDESL (289 aa). Residues 865–873 and Lys887 contribute to the ATP site; that span reads VGSGGFGEV. Residue Tyr932 is modified to Phosphotyrosine. Asp987 (proton acceptor) is an active-site residue. A Phosphoserine modification is found at Ser1022. Phosphotyrosine is present on Tyr1030. Thr1141 bears the Phosphothreonine mark. Positions 1142–1166 are disordered; the sequence is EEDESLDEFSLKETPLVEESRDKEP.

The protein belongs to the protein kinase superfamily. Ser/Thr protein kinase family. In terms of tissue distribution, predominantly expressed in vascular tissues. From 7 day old seedlings, it is expressed in the columella cells of the root tip, in the vascular initials in the meristematic region of the root and in vascular tissues. After germination, it is expressed in the stele cell and in the early differentiation zone of the root, where the expression continues from the root to the hypocotyls and cotyledons following the midvein. In mature plants, it is expressed in the vasculature of the leaf, predominantly in the midvein, and in the vascular bundles of inflorescence stems. Localizes to procambial cells of the vascular bundles located between the differentiating xylem and the phloem.

It localises to the cell membrane. It catalyses the reaction L-seryl-[protein] + ATP = O-phospho-L-seryl-[protein] + ADP + H(+). The enzyme catalyses L-threonyl-[protein] + ATP = O-phospho-L-threonyl-[protein] + ADP + H(+). Functionally, receptor with a serine/threonine-protein kinase activity. Regulates, in response to brassinosteroid binding, a signaling cascade involved in plant development. Binds brassinolide. May be involved in cell growth and vascular differentiation. In Arabidopsis thaliana (Mouse-ear cress), this protein is Serine/threonine-protein kinase BRI1-like 1 (BRL1).